Here is a 251-residue protein sequence, read N- to C-terminus: Triosephosphate isomerase (251 aa).

9–11 (NWK) provides a ligand contact to substrate. Histidine 95 (electrophile) is an active-site residue. The active-site Proton acceptor is the glutamate 167. Residues glycine 173, serine 212, and 233 to 234 (GG) contribute to the substrate site.

It belongs to the triosephosphate isomerase family. In terms of assembly, homodimer.

The protein resides in the cytoplasm. The catalysed reaction is D-glyceraldehyde 3-phosphate = dihydroxyacetone phosphate. It participates in carbohydrate biosynthesis; gluconeogenesis. It functions in the pathway carbohydrate degradation; glycolysis; D-glyceraldehyde 3-phosphate from glycerone phosphate: step 1/1. Its function is as follows. Involved in the gluconeogenesis. Catalyzes stereospecifically the conversion of dihydroxyacetone phosphate (DHAP) to D-glyceraldehyde-3-phosphate (G3P). This Pseudomonas aeruginosa (strain LESB58) protein is Triosephosphate isomerase.